The following is a 586-amino-acid chain: FAD-linked oxidoreductase orf1 (586 aa).

Residues 1 to 17 form the signal peptide; it reads MKSFATTVLLVTPGIYA. 12 N-linked (GlcNAc...) asparagine glycosylation sites follow: Asn-29, Asn-51, Asn-79, Asn-110, Asn-146, Asn-188, Asn-314, Asn-321, Asn-358, Asn-402, Asn-434, and Asn-461. The FAD-binding PCMH-type domain maps to 124–303; sequence TLGNYVSYAI…LSMTAKVHPD (180 aa).

Belongs to the oxygen-dependent FAD-linked oxidoreductase family.

It carries out the reaction betaenone C = betaenone A. It participates in mycotoxin biosynthesis. Functionally, FAD-linked oxidoreductase; part of the gene cluster that mediates the biosynthesis of betaenones, phytotoxic polyketides involved in leaf spot disease in sugar beets. The first step of the pathway is the synthesis of dehydroprobetaenone I by the polyketide synthase bet1 and the enoyl reductase bet3 via condensation of one acetyl-CoA starter unit with 7 malonyl-CoA units and 5 methylations. The C-terminal reductase (R) domain of bet1 catalyzes the reductive release of the polyketide chain. Because bet1 lacks a designated enoylreductase (ER) domain, the required activity is provided the enoyl reductase bet3. The short-chain dehydrogenase/reductase bet4 then catalyzes reduction of dehydroprobetaenone I to probetaenone I. The cytochrome P450 monooxygenase bet2 catalyzes successive epoxidation, oxidation (resulting from epoxide opening) and hydroxylation to install a tertiary alcohol in the decaline ring to yield betaenone C from dehydroprobetaenone I and betaenone B from probetaenone I. The FAD-linked oxidoreductase (orf1) is probably responsible for the conversion of betaenone C to betaenone A via an intramolecular aldol reaction between C-1 and C-17 to form the bridged tricyclic system in betaenone A. In Neocamarosporium betae (Beet black rot fungus), this protein is FAD-linked oxidoreductase orf1.